The sequence spans 261 residues: 5'-nucleotidase SurE (261 aa).

A divalent metal cation-binding residues include D8, D9, S40, and N94.

This sequence belongs to the SurE nucleotidase family. Requires a divalent metal cation as cofactor.

The protein resides in the cytoplasm. It catalyses the reaction a ribonucleoside 5'-phosphate + H2O = a ribonucleoside + phosphate. Its function is as follows. Nucleotidase that shows phosphatase activity on nucleoside 5'-monophosphates. The protein is 5'-nucleotidase SurE of Anaplasma marginale (strain St. Maries).